The sequence spans 89 residues: Elongation factor 1-beta (89 aa).

This sequence belongs to the EF-1-beta/EF-1-delta family.

In terms of biological role, promotes the exchange of GDP for GTP in EF-1-alpha/GDP, thus allowing the regeneration of EF-1-alpha/GTP that could then be used to form the ternary complex EF-1-alpha/GTP/AAtRNA. This is Elongation factor 1-beta (ef1b) from Methanothermobacter thermautotrophicus (strain ATCC 29096 / DSM 1053 / JCM 10044 / NBRC 100330 / Delta H) (Methanobacterium thermoautotrophicum).